The primary structure comprises 574 residues: Cholinesterase (574 aa).

Asn-57 carries N-linked (GlcNAc...) asparagine glycosylation. Cys-65 and Cys-92 are disulfide-bonded. N-linked (GlcNAc...) asparagine glycosylation is present at Asn-106. Substrate is bound at residue 116–117; it reads GG. The active-site Acyl-ester intermediate is Ser-198. Residue Ser-198 is modified to Phosphoserine. N-linked (GlcNAc...) asparagine glycans are attached at residues Asn-241 and Asn-256. Cys-252 and Cys-263 are disulfide-bonded. Glu-325 (charge relay system) is an active-site residue. A glycan (N-linked (GlcNAc...) asparagine) is linked at Asn-341. Cys-400 and Cys-519 are joined by a disulfide. His-438 acts as the Charge relay system in catalysis. N-linked (GlcNAc...) asparagine glycans are attached at residues Asn-455, Asn-481, and Asn-486.

This sequence belongs to the type-B carboxylesterase/lipase family. Homotetramer; disulfide-linked. Dimer of dimers. Detected in blood plasma (at protein level). Present in most cells except erythrocytes.

Its subcellular location is the secreted. It catalyses the reaction an acylcholine + H2O = a carboxylate + choline + H(+). Functionally, esterase with broad substrate specificity. Contributes to the inactivation of the neurotransmitter acetylcholine. Can degrade neurotoxic organophosphate esters. In Equus caballus (Horse), this protein is Cholinesterase (BCHE).